A 188-amino-acid polypeptide reads, in one-letter code: Elongation factor P (188 aa).

N6-(3,6-diaminohexanoyl)-5-hydroxylysine is present on Lys-34.

Belongs to the elongation factor P family. May be beta-lysylated on the epsilon-amino group of Lys-34 by the combined action of EpmA and EpmB, and then hydroxylated on the C5 position of the same residue by EpmC (if this protein is present). Lysylation is critical for the stimulatory effect of EF-P on peptide-bond formation. The lysylation moiety may extend toward the peptidyltransferase center and stabilize the terminal 3-CCA end of the tRNA. Hydroxylation of the C5 position on Lys-34 may allow additional potential stabilizing hydrogen-bond interactions with the P-tRNA.

Its subcellular location is the cytoplasm. The protein operates within protein biosynthesis; polypeptide chain elongation. Its function is as follows. Involved in peptide bond synthesis. Alleviates ribosome stalling that occurs when 3 or more consecutive Pro residues or the sequence PPG is present in a protein, possibly by augmenting the peptidyl transferase activity of the ribosome. Modification of Lys-34 is required for alleviation. The sequence is that of Elongation factor P from Hamiltonella defensa subsp. Acyrthosiphon pisum (strain 5AT).